Here is a 258-residue protein sequence, read N- to C-terminus: HVA22-like protein j (258 aa).

Positions 153-258 (AANQPPTERN…RSNSRTQPAA (106 aa)) are disordered. The segment covering 156 to 169 (QPPTERNVNMNAQS) has biased composition (polar residues). A compositionally biased stretch (pro residues) spans 206–215 (WPPPTPPPTP).

Belongs to the DP1 family.

The chain is HVA22-like protein j (HVA22J) from Arabidopsis thaliana (Mouse-ear cress).